The following is a 129-amino-acid chain: Ribulose bisphosphate carboxylase small subunit (129 aa).

Residues 104–120 (ENEPSLRMTRTESDGRS) show a composition bias toward basic and acidic residues. The segment at 104-129 (ENEPSLRMTRTESDGRSQHYTWETQR) is disordered.

It belongs to the RuBisCO small chain family. In terms of assembly, heterohexadecamer of 8 large and 8 small subunits.

Functionally, ruBisCO catalyzes two reactions: the carboxylation of D-ribulose 1,5-bisphosphate, the primary event in carbon dioxide fixation, as well as the oxidative fragmentation of the pentose substrate. Both reactions occur simultaneously and in competition at the same active site. Although the small subunit is not catalytic it is essential for maximal activity. The chain is Ribulose bisphosphate carboxylase small subunit from Sinorhizobium medicae (strain WSM419) (Ensifer medicae).